The chain runs to 124 residues: Fluoride-specific ion channel FluC (124 aa).

The next 4 helical transmembrane spans lie at 4 to 24, 32 to 52, 67 to 87, and 96 to 116; these read IVAI…LAGW, GFPY…GLIM, IGLT…SYET, and FITA…CTWL. The Na(+) site is built by Gly75 and Thr78.

Belongs to the fluoride channel Fluc/FEX (TC 1.A.43) family.

It localises to the cell inner membrane. It carries out the reaction fluoride(in) = fluoride(out). Na(+) is not transported, but it plays an essential structural role and its presence is essential for fluoride channel function. Its function is as follows. Fluoride-specific ion channel. Important for reducing fluoride concentration in the cell, thus reducing its toxicity. The chain is Fluoride-specific ion channel FluC from Geobacter metallireducens (strain ATCC 53774 / DSM 7210 / GS-15).